Reading from the N-terminus, the 543-residue chain is Hydroxylamine reductase (543 aa).

[4Fe-4S] cluster-binding residues include Cys-3, Cys-6, Cys-15, and Cys-21. The hybrid [4Fe-2O-2S] cluster site is built by His-244, Glu-268, Cys-312, Cys-399, Cys-427, Cys-452, Glu-486, and Lys-488. At Cys-399 the chain carries Cysteine persulfide.

Belongs to the HCP family. [4Fe-4S] cluster serves as cofactor. It depends on hybrid [4Fe-2O-2S] cluster as a cofactor.

It is found in the cytoplasm. It catalyses the reaction A + NH4(+) + H2O = hydroxylamine + AH2 + H(+). Its function is as follows. Catalyzes the reduction of hydroxylamine to form NH(3) and H(2)O. This is Hydroxylamine reductase from Methanocella arvoryzae (strain DSM 22066 / NBRC 105507 / MRE50).